The sequence spans 798 residues: Disintegrin and metalloproteinase domain-containing protein B (798 aa).

An N-terminal signal peptide occupies residues 1–23 (MKAFSCLLAVIATAASLFQHVDA). The Extracellular portion of the chain corresponds to 24-706 (SHARDKLNNI…VSDWVSRHKP (683 aa)). N-linked (GlcNAc...) asparagine glycans are attached at residues N32, N226, N227, N313, and N407. The Peptidase M12B domain occupies 271–510 (KVALIGVVAD…RTILTNCLTT (240 aa)). Disulfide bonds link C395/C495, C448/C459, and C580/C600. Residue H431 participates in Zn(2+) binding. E432 is an active-site residue. The Zn(2+) site is built by H435 and H441. Residues 519–608 (GQQCGNGIVE…DCPHDIHSKD (90 aa)) form the Disintegrin domain. The helical transmembrane segment at 707-727 (IVIGVAVGAGCLLLLAIASCI) threads the bilayer. At 728–798 (CGRSRRQRPR…PGHMPPTRYA (71 aa)) the chain is on the cytoplasmic side. Residues 734 to 798 (QRPRNRKMPP…PGHMPPTRYA (65 aa)) are disordered. Pro residues predominate over residues 775-792 (NNIPPPINAPPPAYPGHM).

It depends on Zn(2+) as a cofactor.

The protein resides in the membrane. In terms of biological role, probable zinc protease. The polypeptide is Disintegrin and metalloproteinase domain-containing protein B (ADM-B) (Trichophyton verrucosum (strain HKI 0517)).